We begin with the raw amino-acid sequence, 41 residues long: Photosystem II reaction center protein L (41 aa).

Residues 20–40 (SLYWGLLLIFVLAVPFSNYFF) form a helical membrane-spanning segment.

The protein belongs to the PsbL family. In terms of assembly, PSII is composed of 1 copy each of membrane proteins PsbA, PsbB, PsbC, PsbD, PsbE, PsbF, PsbH, PsbI, PsbJ, PsbK, PsbL, PsbM, PsbT, PsbX, PsbY, PsbZ, Psb30/Ycf12, at least 3 peripheral proteins of the oxygen-evolving complex and a large number of cofactors. It forms dimeric complexes.

The protein localises to the plastid. It is found in the chloroplast thylakoid membrane. Functionally, one of the components of the core complex of photosystem II (PSII). PSII is a light-driven water:plastoquinone oxidoreductase that uses light energy to abstract electrons from H(2)O, generating O(2) and a proton gradient subsequently used for ATP formation. It consists of a core antenna complex that captures photons, and an electron transfer chain that converts photonic excitation into a charge separation. This subunit is found at the monomer-monomer interface and is required for correct PSII assembly and/or dimerization. The chain is Photosystem II reaction center protein L from Pinus koraiensis (Korean pine).